The chain runs to 364 residues: tRNA-specific 2-thiouridylase MnmA 2 (364 aa).

ATP-binding positions include 10–17 (GMSGGVDS) and M36. Residue C106 is the Nucleophile of the active site. Cysteines 106 and 204 form a disulfide. Residue G130 coordinates ATP. Positions 154 to 156 (KDQ) are interaction with tRNA. C204 acts as the Cysteine persulfide intermediate in catalysis. The segment at 310–311 (RY) is interaction with tRNA.

This sequence belongs to the MnmA/TRMU family.

It is found in the cytoplasm. It catalyses the reaction S-sulfanyl-L-cysteinyl-[protein] + uridine(34) in tRNA + AH2 + ATP = 2-thiouridine(34) in tRNA + L-cysteinyl-[protein] + A + AMP + diphosphate + H(+). Functionally, catalyzes the 2-thiolation of uridine at the wobble position (U34) of tRNA, leading to the formation of s(2)U34. This chain is tRNA-specific 2-thiouridylase MnmA 2, found in Caldanaerobacter subterraneus subsp. tengcongensis (strain DSM 15242 / JCM 11007 / NBRC 100824 / MB4) (Thermoanaerobacter tengcongensis).